We begin with the raw amino-acid sequence, 878 residues long: Coatomer subunit gamma (878 aa).

HEAT repeat units follow at residues 64–101 (REATDCFFAMTKLFQSKDVVLRRMVYLGIKELSSVAED), 287–324 (RMLSPAFSILQLFCSSPKATLRFAAVRTLNKVAMTHPA), 326–359 (VTTCNLDLEGLITDSNRSVATLAITTLLKTGAES), 360–396 (SVERLMKQISTFVAEISDEFKIVVVQAICALCTKYPR), 399–434 (TVLMNFLSGMLREEGGLEYKTSIVDTIITIIEENAD), and 471–508 (ATPSKYIRFIYNRVILESPIVRAAAVTALSQFGASCPA).

This sequence belongs to the COPG family. As to quaternary structure, oligomeric complex that consists of at least the alpha, beta, beta', gamma, delta, epsilon and zeta subunits.

The protein resides in the cytoplasm. Its subcellular location is the golgi apparatus membrane. It is found in the cytoplasmic vesicle. It localises to the COPI-coated vesicle membrane. The protein localises to the endoplasmic reticulum. In terms of biological role, the coatomer is a cytosolic protein complex that binds to dilysine motifs and reversibly associates with Golgi non-clathrin-coated vesicles, which further mediate biosynthetic protein transport from the ER, via the Golgi up to the trans Golgi network. Coatomer complex is required for budding from Golgi membranes, and is essential for the retrograde Golgi-to-ER transport of dilysine-tagged proteins. Required for limiting lipid storage in lipid droplets. Involved in the expansion of luminal extracellular matrices and apical membrane during tubulogenesis. Required in the tracheal epithelium for luminal protein secretion and diametric tube growth. In salivary glands, required for deposition of O-glycans and luminal extracellular matrix assembly. Required for epidermal morphogenesis and cuticle development. This Drosophila pseudoobscura pseudoobscura (Fruit fly) protein is Coatomer subunit gamma.